The following is a 274-amino-acid chain: Thiamine kinase (274 aa).

This sequence belongs to the thiamine kinase family.

The catalysed reaction is thiamine + ATP = thiamine phosphate + ADP + H(+). It participates in cofactor biosynthesis; thiamine diphosphate biosynthesis; thiamine phosphate from thiamine: step 1/1. Catalyzes the ATP-dependent phosphorylation of thiamine to thiamine phosphate. Is involved in thiamine salvage. This Salmonella choleraesuis (strain SC-B67) protein is Thiamine kinase.